A 4646-amino-acid chain; its full sequence is Cytoplasmic dynein 1 heavy chain 1 (4646 aa).

N-acetylserine is present on serine 2. Residues 53–1867 (EAALEEKSAL…SIQMANAKFN (1815 aa)) are stem. Position 70 is a phosphoserine (serine 70). Coiled-coil stretches lie at residues 181–202 (SVEKKIAELEMGLLHLQQNIEI), 455–478 (AHRKLQARLDQMRKFRRQHEQLRA), and 543–566 (TEAWEAAMKRYDERIDRVETRITA). Residues 448–703 (MVWRINPAHR…NTQEIFDDWA (256 aa)) form an interaction with DYNC1I2 region. Positions 651–802 (AKQIDRQLTA…EKVEERNTIS (152 aa)) are interaction with DYNC1LI2. Lysine 1125 carries the post-translational modification N6-acetyllysine. Coiled coils occupy residues 1171-1252 (TYVQ…AVES) and 1357-1373 (RKLRQNLDALLNQLKSF). Phosphoserine is present on serine 1230. AAA stretches follow at residues 1868-2099 (YGFE…VLVS), 2180-2452 (EELK…LTRL), 2556-2805 (EVET…WVRG), and 2899-3168 (VFYE…GGRT). Residues 1906–1913 (GPAGTGKT) and 2224–2231 (GPSGSGKS) contribute to the ATP site. Positions 2390-2411 (GEDEAQRRRKGKEDEGEEAASP) are disordered. Residues 2595-2602 (GPPGSGKT) and 2937-2944 (GVSGAGKT) each bind ATP. 3 coiled-coil regions span residues 3189–3275 (EKRS…ADKQ), 3396–3500 (AIAQ…KNQM), and 3737–3800 (EFQL…VSQQ). The stalk stretch occupies residues 3189–3500 (EKRSELEEQQ…KTSETFKNQM (312 aa)). Lysine 3480 bears the N6-acetyllysine mark. 2 AAA regions span residues 3553-3782 (LSNA…EVTR) and 4005-4221 (AHMF…TVDT). The residue at position 4162 (serine 4162) is a Phosphoserine. Lysine 4283 is subject to N6-acetyllysine. A Phosphothreonine modification is found at threonine 4366. A Phosphoserine modification is found at serine 4368.

It belongs to the dynein heavy chain family. Homodimer. The cytoplasmic dynein 1 complex consists of two catalytic heavy chains (HCs) and a number of non-catalytic subunits presented by intermediate chains (ICs), light intermediate chains (LICs) and light chains (LCs); the composition seems to vary in respect to the IC, LIC and LC composition. The heavy chain homodimer serves as a scaffold for the probable homodimeric assembly of the respective non-catalytic subunits. The ICs and LICs bind directly to the HC dimer and dynein LCs assemble on the IC dimer. Interacts with DYNC1LI1; DYNC1LI1 and DYNC1LI2 bind mutually exclusive to DYNC1H1. Interacts with DYNC1LI2; DYNC1LI1 and DYNC1LI2 bind mutually exclusive to DYNC1H1. Interacts with DYNC1I2. Interacts with BICD2. Interacts with isoform 2 of CRACR2A. Interacts with DNALI1.

It localises to the cytoplasm. It is found in the cytoskeleton. In terms of biological role, cytoplasmic dynein 1 acts as a motor for the intracellular retrograde motility of vesicles and organelles along microtubules. Dynein has ATPase activity; the force-producing power stroke is thought to occur on release of ADP. Plays a role in mitotic spindle assembly and metaphase plate congression. The protein is Cytoplasmic dynein 1 heavy chain 1 of Homo sapiens (Human).